The following is a 356-amino-acid chain: Peptide chain release factor 1 (356 aa).

Residue Q233 is modified to N5-methylglutamine.

It belongs to the prokaryotic/mitochondrial release factor family. Methylated by PrmC. Methylation increases the termination efficiency of RF1.

It localises to the cytoplasm. Peptide chain release factor 1 directs the termination of translation in response to the peptide chain termination codons UAG and UAA. The polypeptide is Peptide chain release factor 1 (Endomicrobium trichonymphae).